A 575-amino-acid chain; its full sequence is MTLFAEIRDTVLAAIDTLVADNVLPSGLEMRAVTVEPPRDASHGDMATNAAMVLAKPAGMKPRDIAEALAAKLADDARIDTVDVAGPGFLNLRLSGDVWRGVIADALTQGEAYGRSKIGAGKRVNVEYVSANPTGPLHVGHTRGAVFGDALASLLDVAGYDVTREYYINDGGAQVDVLVRSVYLRYLEAHGQDVAFEDGTYPGDYLIDVGQALKDKVGDAFVDKGEQFWLAEIREFATEQMMDLIRKDLALLGVEMDVFYSEKSLYGTGRIEAAIDDLRGKGLIYEGYLEPPKGKTPEDWEPREQTLFKSTEHGDDVDRPVMKSDGSWTYFAPDIAYHFDKVSRGFDELIDVFGADHGGYVKRMKAAVSALSGGDVPLDVKLTQLVKLRRGDEELKMSKRAGTFVTLADVVEMVGADVTRFHMLTRKNDAPLDFDVDKVREQSKDNPVWYVQYAHARIKSVLRKAEEAGMSPDPANLNAVNDPAELALAAKIAEYPRLIEIAAKGNEPHRVAFYLFDLASDFHGLWNKGNAETHLRFFQDDDPSATSGKLCLISAVAIVISNGLGILGVTPVDQM.

Residues 131–141 (ANPTGPLHVGH) carry the 'HIGH' region motif.

This sequence belongs to the class-I aminoacyl-tRNA synthetase family. As to quaternary structure, monomer.

Its subcellular location is the cytoplasm. The enzyme catalyses tRNA(Arg) + L-arginine + ATP = L-arginyl-tRNA(Arg) + AMP + diphosphate. The polypeptide is Arginine--tRNA ligase (Jannaschia sp. (strain CCS1)).